Consider the following 315-residue polypeptide: tRNA dimethylallyltransferase (315 aa).

10-17 lines the ATP pocket; the sequence is GPTEVGKT. 12 to 17 contributes to the substrate binding site; the sequence is TEVGKT. The segment at 35–38 is interaction with substrate tRNA; it reads DSMQ.

Belongs to the IPP transferase family. As to quaternary structure, monomer. Requires Mg(2+) as cofactor.

The enzyme catalyses adenosine(37) in tRNA + dimethylallyl diphosphate = N(6)-dimethylallyladenosine(37) in tRNA + diphosphate. Its function is as follows. Catalyzes the transfer of a dimethylallyl group onto the adenine at position 37 in tRNAs that read codons beginning with uridine, leading to the formation of N6-(dimethylallyl)adenosine (i(6)A). The protein is tRNA dimethylallyltransferase of Geobacillus thermodenitrificans (strain NG80-2).